A 413-amino-acid polypeptide reads, in one-letter code: Methylaspartate ammonia-lyase (413 aa).

Q172 serves as a coordination point for (2S,3S)-3-methyl-L-aspartate. Positions 238, 273, and 307 each coordinate Mg(2+). Q329 is a (2S,3S)-3-methyl-L-aspartate binding site. Catalysis depends on K331, which acts as the Proton acceptor. Residues T360–C361 and C361 contribute to the (2S,3S)-3-methyl-L-aspartate site.

This sequence belongs to the methylaspartate ammonia-lyase family. Homodimer. It depends on Mg(2+) as a cofactor.

The catalysed reaction is (2S,3S)-3-methyl-L-aspartate = mesaconate + NH4(+). The protein operates within amino-acid degradation; L-glutamate degradation via mesaconate pathway; acetate and pyruvate from L-glutamate: step 2/4. With respect to regulation, inhibited by calcium ions. Functionally, involved in the methylaspartate cycle. Catalyzes the formation of the alpha,beta-unsaturated bond by the reversible anti elimination of ammonia from L-threo-beta-methylaspartate (L-threo-(2S,3S)-3-methylaspartate) to give mesaconate. It can also use L-erythro-beta-methylaspartate (L-erythro-(2S,3R)-3-methylaspartate), L-aspartate, fumarate and ethylfumarate as substrates. The sequence is that of Methylaspartate ammonia-lyase from Clostridium tetanomorphum.